The following is a 109-amino-acid chain: Large ribosomal subunit protein uL22 (109 aa).

The protein belongs to the universal ribosomal protein uL22 family. As to quaternary structure, part of the 50S ribosomal subunit.

This protein binds specifically to 23S rRNA; its binding is stimulated by other ribosomal proteins, e.g. L4, L17, and L20. It is important during the early stages of 50S assembly. It makes multiple contacts with different domains of the 23S rRNA in the assembled 50S subunit and ribosome. Functionally, the globular domain of the protein is located near the polypeptide exit tunnel on the outside of the subunit, while an extended beta-hairpin is found that lines the wall of the exit tunnel in the center of the 70S ribosome. The polypeptide is Large ribosomal subunit protein uL22 (Neisseria gonorrhoeae (strain ATCC 700825 / FA 1090)).